The chain runs to 453 residues: Probable glycine dehydrogenase (decarboxylating) subunit 1 (453 aa).

The protein belongs to the GcvP family. N-terminal subunit subfamily. As to quaternary structure, the glycine cleavage system is composed of four proteins: P, T, L and H. In this organism, the P 'protein' is a heterodimer of two subunits.

The enzyme catalyses N(6)-[(R)-lipoyl]-L-lysyl-[glycine-cleavage complex H protein] + glycine + H(+) = N(6)-[(R)-S(8)-aminomethyldihydrolipoyl]-L-lysyl-[glycine-cleavage complex H protein] + CO2. In terms of biological role, the glycine cleavage system catalyzes the degradation of glycine. The P protein binds the alpha-amino group of glycine through its pyridoxal phosphate cofactor; CO(2) is released and the remaining methylamine moiety is then transferred to the lipoamide cofactor of the H protein. The sequence is that of Probable glycine dehydrogenase (decarboxylating) subunit 1 from Nitrosomonas europaea (strain ATCC 19718 / CIP 103999 / KCTC 2705 / NBRC 14298).